The chain runs to 310 residues: ADP-L-glycero-D-manno-heptose-6-epimerase (310 aa).

NADP(+)-binding positions include 10 to 11 (FI), 31 to 32 (DN), lysine 38, lysine 53, 75 to 79 (EGACS), and asparagine 92. Catalysis depends on tyrosine 140, which acts as the Proton acceptor. Lysine 144 serves as a coordination point for NADP(+). Residue asparagine 169 participates in substrate binding. NADP(+) contacts are provided by valine 170 and lysine 178. Residue lysine 178 is the Proton acceptor of the active site. Residues serine 180, histidine 187, 201–204 (FEGS), arginine 209, and tyrosine 272 contribute to the substrate site.

Belongs to the NAD(P)-dependent epimerase/dehydratase family. HldD subfamily. As to quaternary structure, homopentamer. NADP(+) serves as cofactor.

The catalysed reaction is ADP-D-glycero-beta-D-manno-heptose = ADP-L-glycero-beta-D-manno-heptose. It participates in nucleotide-sugar biosynthesis; ADP-L-glycero-beta-D-manno-heptose biosynthesis; ADP-L-glycero-beta-D-manno-heptose from D-glycero-beta-D-manno-heptose 7-phosphate: step 4/4. Functionally, catalyzes the interconversion between ADP-D-glycero-beta-D-manno-heptose and ADP-L-glycero-beta-D-manno-heptose via an epimerization at carbon 6 of the heptose. The sequence is that of ADP-L-glycero-D-manno-heptose-6-epimerase from Salmonella heidelberg (strain SL476).